Consider the following 98-residue polypeptide: Keratin-associated protein 3-3 (98 aa).

A2 carries the N-acetylalanine modification. A run of 3 repeats spans residues 3 to 7, 8 to 12, and 47 to 51. The segment at 3 to 59 is 3 X 5 AA repeats of C-C-X(3); the sequence is CCAPLCCSARTSPATTICSSDKFCRCGVCLPSTCPHTVWLLEPTCCDNCPPPCHIPQ.

It belongs to the KRTAP type 3 family. In terms of assembly, interacts with hair keratins.

Its function is as follows. In the hair cortex, hair keratin intermediate filaments are embedded in an interfilamentous matrix, consisting of hair keratin-associated proteins (KRTAP), which are essential for the formation of a rigid and resistant hair shaft through their extensive disulfide bond cross-linking with abundant cysteine residues of hair keratins. The matrix proteins include the high-sulfur and high-glycine-tyrosine keratins. The chain is Keratin-associated protein 3-3 from Bos taurus (Bovine).